The primary structure comprises 304 residues: Energy-coupling factor transporter ATP-binding protein EcfA2 (304 aa).

Positions 11–260 (LKADEILAVS…QTFLEKTTIV (250 aa)) constitute an ABC transporter domain. 54–61 (GDSGSGKS) provides a ligand contact to ATP.

It belongs to the ABC transporter superfamily. Energy-coupling factor EcfA family. In terms of assembly, forms a stable energy-coupling factor (ECF) transporter complex composed of 2 membrane-embedded substrate-binding proteins (S component), 2 ATP-binding proteins (A component) and 2 transmembrane proteins (T component).

The protein localises to the cell membrane. ATP-binding (A) component of a common energy-coupling factor (ECF) ABC-transporter complex. Unlike classic ABC transporters this ECF transporter provides the energy necessary to transport a number of different substrates. The sequence is that of Energy-coupling factor transporter ATP-binding protein EcfA2 from Mycoplasma genitalium (strain ATCC 33530 / DSM 19775 / NCTC 10195 / G37) (Mycoplasmoides genitalium).